The following is a 389-amino-acid chain: MSMSNFLFTSESVTEGHPDKVADQISDSILDAIITEDKTARVACETLVTTGLAFVAGEITTSSWVDIPDIIRSTIKGIGYNDSSMGFDWSTCAVITSIDKQSPDIAQGVNPGEGLFEEQGAGDQGLMFGFACNETPVFMPMPIYYAHRITRKLAEVRKNGVLEFLRPDGKSQVTVEYDDHRPKRIDTIVVAAQHAPNVSYSMIRESIIEEVIKKVFPPELIDDKTKYFINSTGRFVIGGPMGDCGLTGRKIIADTYGGQGSHGGGCFSGKDPSKVDRTASYMARYVAKNIVAAGVADKVEVQVAYSIGVAEPVSLMIDTFGTGKIPSDRIAEIVRKLFSFKPANMIKQLRLLRPIFKKTACYGHFGRNDPDFTWEKTDMVEPIRELAGI.

ATP is bound at residue His17. Asp19 lines the Mg(2+) pocket. Glu45 provides a ligand contact to K(+). Glu58 and Gln101 together coordinate L-methionine. Residues 101–111 (QSPDIAQGVNP) are flexible loop. Residues 168-170 (DGK), 234-235 (RF), Asp243, 249-250 (RK), and Lys270 contribute to the ATP site. Asp243 contributes to the L-methionine binding site. Lys274 is an L-methionine binding site.

It belongs to the AdoMet synthase family. Homotetramer; dimer of dimers. Requires Mg(2+) as cofactor. It depends on K(+) as a cofactor.

The protein resides in the cytoplasm. It carries out the reaction L-methionine + ATP + H2O = S-adenosyl-L-methionine + phosphate + diphosphate. Its pathway is amino-acid biosynthesis; S-adenosyl-L-methionine biosynthesis; S-adenosyl-L-methionine from L-methionine: step 1/1. In terms of biological role, catalyzes the formation of S-adenosylmethionine (AdoMet) from methionine and ATP. The overall synthetic reaction is composed of two sequential steps, AdoMet formation and the subsequent tripolyphosphate hydrolysis which occurs prior to release of AdoMet from the enzyme. This is S-adenosylmethionine synthase from Syntrophobacter fumaroxidans (strain DSM 10017 / MPOB).